The following is a 260-amino-acid chain: Indole-3-glycerol phosphate synthase (260 aa).

Belongs to the TrpC family.

It carries out the reaction 1-(2-carboxyphenylamino)-1-deoxy-D-ribulose 5-phosphate + H(+) = (1S,2R)-1-C-(indol-3-yl)glycerol 3-phosphate + CO2 + H2O. Its pathway is amino-acid biosynthesis; L-tryptophan biosynthesis; L-tryptophan from chorismate: step 4/5. This Staphylococcus haemolyticus (strain JCSC1435) protein is Indole-3-glycerol phosphate synthase.